We begin with the raw amino-acid sequence, 630 residues long: Putative adenylate cyclase regulatory protein (630 aa).

The segment at 10–46 adopts an RING-type zinc-finger fold; it reads CAVCREPWAEGALELFPCRHVFCTVCVVERWRCPSCQ. LRR repeat units follow at residues 184 to 206, 207 to 230, 231 to 251, 255 to 277, 278 to 301, 302 to 324, 325 to 347, 348 to 370, 371 to 393, 394 to 416, 417 to 439, 440 to 462, 463 to 485, 486 to 508, 509 to 531, 532 to 554, 555 to 577, and 578 to 599; these read FLVH…CRLK, TLEA…CALP, QLTS…RCIH, KLKV…GGMR, SLEK…CKFS, NLRE…KNLI, NLKV…ERLV, NLDK…ANLS, NLKE…QDLN, NLEV…KNLS, KMRE…ETLK, GLEE…WSLH, HLRV…EGIT, GLEE…WNLR, NVCV…QCLT, GLEE…GNLR, NLKC…DRLV, and NLEK…MELM.

May interact with adenylate cyclase to regulate its activity. Its function is as follows. May be involved in the postranscriptional regulation of genes in VSG expression sites. This Trypanosoma equiperdum protein is Putative adenylate cyclase regulatory protein (ESAG8C).